The chain runs to 304 residues: Ribonuclease Z (304 aa).

Zn(2+) is bound by residues histidine 63, histidine 65, aspartate 67, histidine 68, histidine 141, aspartate 208, and histidine 266. Aspartate 67 functions as the Proton acceptor in the catalytic mechanism.

Belongs to the RNase Z family. Homodimer. Zn(2+) is required as a cofactor.

It catalyses the reaction Endonucleolytic cleavage of RNA, removing extra 3' nucleotides from tRNA precursor, generating 3' termini of tRNAs. A 3'-hydroxy group is left at the tRNA terminus and a 5'-phosphoryl group is left at the trailer molecule.. Its function is as follows. Zinc phosphodiesterase, which displays some tRNA 3'-processing endonuclease activity. Probably involved in tRNA maturation, by removing a 3'-trailer from precursor tRNA. This chain is Ribonuclease Z, found in Chlamydia muridarum (strain MoPn / Nigg).